A 296-amino-acid chain; its full sequence is Phosphatidylglycerol--prolipoprotein diacylglyceryl transferase (296 aa).

4 helical membrane passes run 28–48, 72–92, 110–130, and 139–159; these read WYGLCFSLGILFASLLGIYLA, FALYSLLFIIPGSRIAYILFY, GGLASHGGMLGLILWALIFSW, and LTFLFLCDLCASVFGCAAFMI. Arg-160 is an a 1,2-diacyl-sn-glycero-3-phospho-(1'-sn-glycerol) binding site. Transmembrane regions (helical) follow at residues 197–217, 226–246, and 263–283; these read VQLYEGMSYLLLSIILFFLSY, GWVTSLGLVGISLIRFFAEFF, and GQILSFPLFVFGLCLGIACFL.

It belongs to the Lgt family.

It is found in the cell inner membrane. The catalysed reaction is L-cysteinyl-[prolipoprotein] + a 1,2-diacyl-sn-glycero-3-phospho-(1'-sn-glycerol) = an S-1,2-diacyl-sn-glyceryl-L-cysteinyl-[prolipoprotein] + sn-glycerol 1-phosphate + H(+). It functions in the pathway protein modification; lipoprotein biosynthesis (diacylglyceryl transfer). Its function is as follows. Catalyzes the transfer of the diacylglyceryl group from phosphatidylglycerol to the sulfhydryl group of the N-terminal cysteine of a prolipoprotein, the first step in the formation of mature lipoproteins. The protein is Phosphatidylglycerol--prolipoprotein diacylglyceryl transferase of Chlamydia caviae (strain ATCC VR-813 / DSM 19441 / 03DC25 / GPIC) (Chlamydophila caviae).